The following is a 39-amino-acid chain: MKVRPSVKPMCEHCKVIKRKGRVMVICSANPKHKQRQGK.

It belongs to the bacterial ribosomal protein bL36 family.

The polypeptide is Large ribosomal subunit protein bL36 (Levilactobacillus brevis (strain ATCC 367 / BCRC 12310 / CIP 105137 / JCM 1170 / LMG 11437 / NCIMB 947 / NCTC 947) (Lactobacillus brevis)).